Consider the following 581-residue polypeptide: UvrABC system protein C (581 aa).

One can recognise a GIY-YIG domain in the interval 15–94 (REPGVYLFEQ…IKRHRPPYNV (80 aa)). The UVR domain maps to 202–237 (GVLADPLRREMEAAAQNQEFERAANLRDKLGAVEAL).

It belongs to the UvrC family. As to quaternary structure, interacts with UvrB in an incision complex.

It localises to the cytoplasm. Functionally, the UvrABC repair system catalyzes the recognition and processing of DNA lesions. UvrC both incises the 5' and 3' sides of the lesion. The N-terminal half is responsible for the 3' incision and the C-terminal half is responsible for the 5' incision. This is UvrABC system protein C from Haloarcula marismortui (strain ATCC 43049 / DSM 3752 / JCM 8966 / VKM B-1809) (Halobacterium marismortui).